We begin with the raw amino-acid sequence, 323 residues long: tRNA dimethylallyltransferase (323 aa).

Position 15–22 (15–22) interacts with ATP; it reads GATGSGKT. 17–22 is a substrate binding site; it reads TGSGKT. 2 interaction with substrate tRNA regions span residues 40–43 and 164–168; these read DSRQ and QRLIR.

This sequence belongs to the IPP transferase family. Monomer. Requires Mg(2+) as cofactor.

The catalysed reaction is adenosine(37) in tRNA + dimethylallyl diphosphate = N(6)-dimethylallyladenosine(37) in tRNA + diphosphate. Catalyzes the transfer of a dimethylallyl group onto the adenine at position 37 in tRNAs that read codons beginning with uridine, leading to the formation of N6-(dimethylallyl)adenosine (i(6)A). The polypeptide is tRNA dimethylallyltransferase (Chloroherpeton thalassium (strain ATCC 35110 / GB-78)).